Reading from the N-terminus, the 178-residue chain is Putative metal-dependent hydrolase GTNG_0529 (178 aa).

Histidine 68, histidine 161, and histidine 165 together coordinate Zn(2+).

The protein belongs to the metal hydrolase YfiT family. In terms of assembly, homodimer. The cofactor is Zn(2+).

The protein resides in the cytoplasm. Functionally, possible metal-dependent hydrolase. The protein is Putative metal-dependent hydrolase GTNG_0529 of Geobacillus thermodenitrificans (strain NG80-2).